We begin with the raw amino-acid sequence, 271 residues long: Zinc-finger homeodomain protein 8 (271 aa).

Ser-16 carries the phosphoserine modification. The segment at Tyr-56–Glu-107 adopts a ZF-HD dimerization-type; degenerate zinc-finger fold. The interval His-125–Pro-154 is disordered. Residues Arg-179 to Ala-242 constitute a DNA-binding region (homeobox).

Homo- and heterodimer with other ZFHD proteins. Interacts with MIF1, MIF2 and MIF3; these interactions prevent nuclear localization and DNA-binding to inhibit transcription regulation activity. Binds to ZHD1, ZHD2, ZHD4, ZHD10 and ZHD11. Interacts with HIPP30. Mostly expressed in flowers and inflorescence.

It is found in the nucleus. Its function is as follows. Putative transcription factor. The sequence is that of Zinc-finger homeodomain protein 8 (ZHD8) from Arabidopsis thaliana (Mouse-ear cress).